Here is a 216-residue protein sequence, read N- to C-terminus: Small ribosomal subunit protein uS3c (216 aa).

The KH type-2 domain maps to 43 to 118; that stretch reads IKNYIQKNIR…KLNIAIVKIT (76 aa).

Belongs to the universal ribosomal protein uS3 family. In terms of assembly, part of the 30S ribosomal subunit.

It is found in the plastid. The protein localises to the chloroplast. This chain is Small ribosomal subunit protein uS3c (rps3), found in Phaseolus vulgaris (Kidney bean).